The chain runs to 181 residues: ATP synthase subunit b (181 aa).

A helical transmembrane segment spans residues L24–V44.

The protein belongs to the ATPase B chain family. In terms of assembly, F-type ATPases have 2 components, F(1) - the catalytic core - and F(0) - the membrane proton channel. F(1) has five subunits: alpha(3), beta(3), gamma(1), delta(1), epsilon(1). F(0) has three main subunits: a(1), b(2) and c(10-14). The alpha and beta chains form an alternating ring which encloses part of the gamma chain. F(1) is attached to F(0) by a central stalk formed by the gamma and epsilon chains, while a peripheral stalk is formed by the delta and b chains.

It is found in the cell membrane. F(1)F(0) ATP synthase produces ATP from ADP in the presence of a proton or sodium gradient. F-type ATPases consist of two structural domains, F(1) containing the extramembraneous catalytic core and F(0) containing the membrane proton channel, linked together by a central stalk and a peripheral stalk. During catalysis, ATP synthesis in the catalytic domain of F(1) is coupled via a rotary mechanism of the central stalk subunits to proton translocation. In terms of biological role, component of the F(0) channel, it forms part of the peripheral stalk, linking F(1) to F(0). This chain is ATP synthase subunit b, found in Mycoplasma capricolum subsp. capricolum (strain California kid / ATCC 27343 / NCTC 10154).